Reading from the N-terminus, the 105-residue chain is Large ribosomal subunit protein eL30 (105 aa).

This sequence belongs to the eukaryotic ribosomal protein eL30 family.

In Methanococcus vannielii (strain ATCC 35089 / DSM 1224 / JCM 13029 / OCM 148 / SB), this protein is Large ribosomal subunit protein eL30 (rpl30e).